Here is a 172-residue protein sequence, read N- to C-terminus: RNA silencing suppressor p19 (172 aa).

Positions 1-15 (MERAIQGNDAREQAY) are enriched in basic and acidic residues. The disordered stretch occupies residues 1 to 38 (MERAIQGNDAREQAYGERWNGGPGGSTSPFQLPDESPS).

This sequence belongs to the tombusvirus protein p19 family. Homodimer.

In terms of biological role, viral suppressor of RNA silencing which binds specifically to silencing RNAs (siRNAs). Acts as a molecular caliper to specifically select siRNAs based on the length of the duplex region of the RNA. This chain is RNA silencing suppressor p19, found in Tomato bushy stunt virus (strain A23) (TBSV).